The chain runs to 224 residues: Orotate phosphoribosyltransferase (224 aa).

Lys29 contacts 5-phospho-alpha-D-ribose 1-diphosphate. Orotate is bound at residue 37 to 38; it reads FF. 5-phospho-alpha-D-ribose 1-diphosphate is bound by residues 75–76, Arg105, Lys106, Lys109, His111, and 130–138; these read YK and DDVITAGTS. Thr134 and Arg162 together coordinate orotate.

The protein belongs to the purine/pyrimidine phosphoribosyltransferase family. PyrE subfamily. In terms of assembly, homodimer. The cofactor is Mg(2+).

It carries out the reaction orotidine 5'-phosphate + diphosphate = orotate + 5-phospho-alpha-D-ribose 1-diphosphate. It functions in the pathway pyrimidine metabolism; UMP biosynthesis via de novo pathway; UMP from orotate: step 1/2. Functionally, catalyzes the transfer of a ribosyl phosphate group from 5-phosphoribose 1-diphosphate to orotate, leading to the formation of orotidine monophosphate (OMP). In Bordetella bronchiseptica (strain ATCC BAA-588 / NCTC 13252 / RB50) (Alcaligenes bronchisepticus), this protein is Orotate phosphoribosyltransferase.